We begin with the raw amino-acid sequence, 132 residues long: Small ribosomal subunit protein uS11 (132 aa).

The protein belongs to the universal ribosomal protein uS11 family. Part of the 30S ribosomal subunit.

Located on the platform of the 30S subunit. The protein is Small ribosomal subunit protein uS11 of Sulfurisphaera tokodaii (strain DSM 16993 / JCM 10545 / NBRC 100140 / 7) (Sulfolobus tokodaii).